Reading from the N-terminus, the 323-residue chain is Acetyl-coenzyme A carboxylase carboxyl transferase subunit alpha (323 aa).

The 255-residue stretch at 39–293 folds into the CoA carboxyltransferase C-terminal domain; sequence RLAGKSQQLT…KRSLAESLRQ (255 aa).

This sequence belongs to the AccA family. In terms of assembly, acetyl-CoA carboxylase is a heterohexamer composed of biotin carboxyl carrier protein (AccB), biotin carboxylase (AccC) and two subunits each of ACCase subunit alpha (AccA) and ACCase subunit beta (AccD).

It localises to the cytoplasm. It carries out the reaction N(6)-carboxybiotinyl-L-lysyl-[protein] + acetyl-CoA = N(6)-biotinyl-L-lysyl-[protein] + malonyl-CoA. Its pathway is lipid metabolism; malonyl-CoA biosynthesis; malonyl-CoA from acetyl-CoA: step 1/1. Component of the acetyl coenzyme A carboxylase (ACC) complex. First, biotin carboxylase catalyzes the carboxylation of biotin on its carrier protein (BCCP) and then the CO(2) group is transferred by the carboxyltransferase to acetyl-CoA to form malonyl-CoA. In Cupriavidus necator (strain ATCC 17699 / DSM 428 / KCTC 22496 / NCIMB 10442 / H16 / Stanier 337) (Ralstonia eutropha), this protein is Acetyl-coenzyme A carboxylase carboxyl transferase subunit alpha.